Reading from the N-terminus, the 310-residue chain is Calcium homeostasis modulator protein 5 (310 aa).

Transmembrane regions (helical) follow at residues 17 to 37, 49 to 69, 101 to 121, and 181 to 201; these read TIGYSVMAILTIGSERIFSMV, FPYGICFLLGPAVVLLVVGFF, LIKVLYGACVAPVMWLTVALL, and QILGWSVIITAVVIALIGTCY.

This sequence belongs to the CALHM family.

Its subcellular location is the membrane. In terms of biological role, pore-forming subunit of a voltage-gated ion channel. In Danio rerio (Zebrafish), this protein is Calcium homeostasis modulator protein 5 (calhm5.1).